The sequence spans 275 residues: Elongation factor Ts (275 aa).

The involved in Mg(2+) ion dislocation from EF-Tu stretch occupies residues 76–79 (TDFV).

The protein belongs to the EF-Ts family.

It localises to the cytoplasm. Functionally, associates with the EF-Tu.GDP complex and induces the exchange of GDP to GTP. It remains bound to the aminoacyl-tRNA.EF-Tu.GTP complex up to the GTP hydrolysis stage on the ribosome. This Nocardia farcinica (strain IFM 10152) protein is Elongation factor Ts.